We begin with the raw amino-acid sequence, 236 residues long: 4-aminobenzoate synthase (236 aa).

The Fe(2+) site is built by Glu-87, His-94, Glu-148, His-180, Asp-184, and His-187.

The protein belongs to the CADD family. Homodimer. Fe(2+) is required as a cofactor. The cofactor is Mn(2+).

Functionally, involved in de novo para-aminobenzoate (PABA) biosynthesis. Acts as a self-sacrificing or 'suicide' enzyme that utilizes its own active site tyrosine residue(s) as the substrate for PABA synthesis. The side chain of the tyrosine residue is released from the protein backbone via cleavage of the C(alpha)-C(beta) bond, leaving a glycine in place of the original tyrosine residue. Reaction requires O(2) and a reduced dimetal cofactor. This chain is 4-aminobenzoate synthase, found in Chlamydia muridarum (strain MoPn / Nigg).